The primary structure comprises 355 residues: 3-isopropylmalate dehydrogenase (355 aa).

Position 78–91 (78–91 (GYKWDNLPRPERPE)) interacts with NAD(+). Substrate contacts are provided by Arg98, Arg136, and Asp226. 3 residues coordinate Mg(2+): Asp226, Asp250, and Asp254. 284–296 (GSAPDIAGQDKAN) contacts NAD(+).

It belongs to the isocitrate and isopropylmalate dehydrogenases family. LeuB type 1 subfamily. In terms of assembly, homodimer. Requires Mg(2+) as cofactor. Mn(2+) is required as a cofactor.

It localises to the cytoplasm. The enzyme catalyses (2R,3S)-3-isopropylmalate + NAD(+) = 4-methyl-2-oxopentanoate + CO2 + NADH. It functions in the pathway amino-acid biosynthesis; L-leucine biosynthesis; L-leucine from 3-methyl-2-oxobutanoate: step 3/4. Catalyzes the oxidation of 3-carboxy-2-hydroxy-4-methylpentanoate (3-isopropylmalate) to 3-carboxy-4-methyl-2-oxopentanoate. The product decarboxylates to 4-methyl-2 oxopentanoate. The protein is 3-isopropylmalate dehydrogenase (leuB) of Arthrospira platensis (Spirulina platensis).